Reading from the N-terminus, the 1622-residue chain is WD repeat-containing protein 97 (1622 aa).

6 WD repeats span residues 187-233 (SEQG…RRLV), 290-329 (LHKT…RMVF), 331-370 (GHTG…QVGE), 552-592 (ELRC…TVFQ), 594-633 (EAHS…EESL), and 687-726 (DPTD…LRLL). 2 disordered regions span residues 1090–1112 (GEKP…EDEE) and 1453–1472 (LHPA…EETD). The stretch at 1094-1118 (GEEGEEDKKEEEEEKEDEELDWALA) forms a coiled coil. Residues 1096-1112 (EGEEDKKEEEEEKEDEE) show a composition bias toward acidic residues.

The protein is WD repeat-containing protein 97 of Homo sapiens (Human).